The chain runs to 299 residues: Protein FAM228A (299 aa).

Residues 135-201 (AKGTSYQHGR…GRNRYKGASS (67 aa)) are disordered. Over residues 146–159 (KTHDTQKEAKETEK) the composition is skewed to basic and acidic residues. Serine 264 is subject to Phosphoserine.

This sequence belongs to the FAM228 family.

This is Protein FAM228A (Fam228a) from Mus musculus (Mouse).